Here is a 319-residue protein sequence, read N- to C-terminus: Acetyl-coenzyme A carboxylase carboxyl transferase subunit alpha (319 aa).

The region spanning 43–296 is the CoA carboxyltransferase C-terminal domain; the sequence is LKQKSVELTQ…KTQLLLDLVE (254 aa).

This sequence belongs to the AccA family. In terms of assembly, acetyl-CoA carboxylase is a heterohexamer composed of biotin carboxyl carrier protein (AccB), biotin carboxylase (AccC) and two subunits each of ACCase subunit alpha (AccA) and ACCase subunit beta (AccD).

It localises to the cytoplasm. It catalyses the reaction N(6)-carboxybiotinyl-L-lysyl-[protein] + acetyl-CoA = N(6)-biotinyl-L-lysyl-[protein] + malonyl-CoA. It participates in lipid metabolism; malonyl-CoA biosynthesis; malonyl-CoA from acetyl-CoA: step 1/1. Functionally, component of the acetyl coenzyme A carboxylase (ACC) complex. First, biotin carboxylase catalyzes the carboxylation of biotin on its carrier protein (BCCP) and then the CO(2) group is transferred by the carboxyltransferase to acetyl-CoA to form malonyl-CoA. The chain is Acetyl-coenzyme A carboxylase carboxyl transferase subunit alpha from Blochmanniella floridana.